Consider the following 146-residue polypeptide: Ribonuclease H (146 aa).

The RNase H type-1 domain occupies 1–143 (MQKKITIYTD…CDELARQAIQ (143 aa)). Asp-10, Glu-48, Asp-70, and Asp-135 together coordinate Mg(2+).

Belongs to the RNase H family. As to quaternary structure, monomer. Mg(2+) is required as a cofactor.

It is found in the cytoplasm. The catalysed reaction is Endonucleolytic cleavage to 5'-phosphomonoester.. Endonuclease that specifically degrades the RNA of RNA-DNA hybrids. The chain is Ribonuclease H from Chlorobium luteolum (strain DSM 273 / BCRC 81028 / 2530) (Pelodictyon luteolum).